We begin with the raw amino-acid sequence, 1755 residues long: Transposon Ty1-MR2 Gag-Pol polyprotein (1755 aa).

3 stretches are compositionally biased toward polar residues: residues 1 to 10, 48 to 60, and 127 to 152; these read MESQQLSNYP, TKAN…TPAS, and QSQF…GNTF. Disordered stretches follow at residues 1–93, 126–173, and 352–421; these read MESQ…MMTQ, PQSQ…RPPP, and GSRN…SKST. The segment covering 153–165 has biased composition (low complexity); it reads TDSSSADSDMTST. Positions 299 to 401 are RNA-binding; that stretch reads NNGIHINNKV…NSKSKTARAH (103 aa). Residues 402–418 are compositionally biased toward low complexity; it reads NVSTSNNSPSTDNDSIS. Residue Ser416 is modified to Phosphoserine. Residue Asp461 is the For protease activity; shared with dimeric partner of the active site. Residues 583 to 640 are integrase-type zinc finger-like; sequence NVHTSESTRKYPYPFIHRMLAHANAQTIRYSLKNNTITYFNESDVDWSSAIDYQCPDC. In terms of domain architecture, Integrase catalytic spans 660–835; the sequence is NSYEPFQYLH…AGLDISTLLP (176 aa). The Mg(2+) site is built by Asp671 and Asp736. Disordered regions lie at residues 956 to 1087, 1092 to 1111, and 1130 to 1186; these read SKAV…ETEK, RSPS…NIVP, and DLPL…EDNE. Low complexity predominate over residues 960–969; sequence SPTDSTPPST. Residues 1005 to 1015 show a composition bias toward polar residues; sequence STPQISNIEST. The span at 1038 to 1053 shows a compositional bias: basic and acidic residues; that stretch reads ESSHASKSKDFRHSDS. 2 stretches are compositionally biased toward polar residues: residues 1054–1082 and 1101–1111; these read YSEN…QISD and PENNSSHNIVP. Residues 1178–1212 carry the Bipartite nuclear localization signal motif; it reads KKRSLEDNETEIKVSRDTWNTKNMRSLEPPRSKKR. A Reverse transcriptase Ty1/copia-type domain is found at 1338–1476; that stretch reads NNYYITQLDI…DILGLEIKYQ (139 aa). Mg(2+) contacts are provided by Asp1346, Asp1427, Asp1428, Asp1610, Glu1652, and Asp1685. The RNase H Ty1/copia-type domain maps to 1610-1752; it reads DASYGNQPYY…IKTFKLLTNK (143 aa).

As to quaternary structure, the capsid protein forms a homotrimer, from which the VLPs are assembled. The protease is a homodimer, whose active site consists of two apposed aspartic acid residues. Post-translationally, initially, virus-like particles (VLPs) are composed of the structural unprocessed proteins Gag and Gag-Pol, and also contain the host initiator methionine tRNA (tRNA(i)-Met) which serves as a primer for minus-strand DNA synthesis, and a dimer of genomic Ty RNA. Processing of the polyproteins occurs within the particle and proceeds by an ordered pathway, called maturation. First, the protease (PR) is released by autocatalytic cleavage of the Gag-Pol polyprotein yielding capsid protein p45 and a Pol-p154 precursor protein. This cleavage is a prerequisite for subsequent processing of Pol-p154 at the remaining sites to release the mature structural and catalytic proteins. Maturation takes place prior to the RT reaction and is required to produce transposition-competent VLPs.

Its subcellular location is the cytoplasm. The protein resides in the nucleus. It carries out the reaction DNA(n) + a 2'-deoxyribonucleoside 5'-triphosphate = DNA(n+1) + diphosphate. It catalyses the reaction Endonucleolytic cleavage to 5'-phosphomonoester.. In terms of biological role, capsid protein (CA) is the structural component of the virus-like particle (VLP), forming the shell that encapsulates the retrotransposons dimeric RNA genome. The particles are assembled from trimer-clustered units and there are holes in the capsid shells that allow for the diffusion of macromolecules. CA also has nucleocapsid-like chaperone activity, promoting primer tRNA(i)-Met annealing to the multipartite primer-binding site (PBS), dimerization of Ty1 RNA and initiation of reverse transcription. Its function is as follows. The aspartyl protease (PR) mediates the proteolytic cleavages of the Gag and Gag-Pol polyproteins after assembly of the VLP. Functionally, reverse transcriptase/ribonuclease H (RT) is a multifunctional enzyme that catalyzes the conversion of the retro-elements RNA genome into dsDNA within the VLP. The enzyme displays a DNA polymerase activity that can copy either DNA or RNA templates, and a ribonuclease H (RNase H) activity that cleaves the RNA strand of RNA-DNA heteroduplexes during plus-strand synthesis and hydrolyzes RNA primers. The conversion leads to a linear dsDNA copy of the retrotransposon that includes long terminal repeats (LTRs) at both ends. Integrase (IN) targets the VLP to the nucleus, where a subparticle preintegration complex (PIC) containing at least integrase and the newly synthesized dsDNA copy of the retrotransposon must transit the nuclear membrane. Once in the nucleus, integrase performs the integration of the dsDNA into the host genome. The sequence is that of Transposon Ty1-MR2 Gag-Pol polyprotein (TY1B-MR2) from Saccharomyces cerevisiae (strain ATCC 204508 / S288c) (Baker's yeast).